The following is a 247-amino-acid chain: Ribosomal RNA small subunit methyltransferase G (247 aa).

Residues Gly84, Phe89, 136 to 137 (AE), and Arg155 contribute to the S-adenosyl-L-methionine site.

The protein belongs to the methyltransferase superfamily. RNA methyltransferase RsmG family.

The protein resides in the cytoplasm. Specifically methylates the N7 position of a guanine in 16S rRNA. In Prochlorococcus marinus (strain MIT 9303), this protein is Ribosomal RNA small subunit methyltransferase G.